The primary structure comprises 470 residues: Ribulose bisphosphate carboxylase large chain (470 aa).

The substrate site is built by Asn118 and Thr168. Lys170 serves as the catalytic Proton acceptor. Substrate is bound at residue Lys172. The Mg(2+) site is built by Lys196, Asp198, and Glu199. Lys196 bears the N6-carboxylysine mark. His289 (proton acceptor) is an active-site residue. The substrate site is built by Arg290, His322, and Ser374. Positions 459-465 (EIKFEFD) match the Interacts with RbcX2 motif.

The protein belongs to the RuBisCO large chain family. Type I subfamily. Heterohexadecamer of 8 large chains and 8 small chains; disulfide-linked. The disulfide link is formed within the large subunit homodimers. Mg(2+) is required as a cofactor. The disulfide bond which can form in the large chain dimeric partners within the hexadecamer appears to be associated with oxidative stress and protein turnover.

It is found in the carboxysome. The catalysed reaction is 2 (2R)-3-phosphoglycerate + 2 H(+) = D-ribulose 1,5-bisphosphate + CO2 + H2O. It carries out the reaction D-ribulose 1,5-bisphosphate + O2 = 2-phosphoglycolate + (2R)-3-phosphoglycerate + 2 H(+). RuBisCO catalyzes two reactions: the carboxylation of D-ribulose 1,5-bisphosphate, the primary event in carbon dioxide fixation, as well as the oxidative fragmentation of the pentose substrate in the photorespiration process. Both reactions occur simultaneously and in competition at the same active site. This chain is Ribulose bisphosphate carboxylase large chain, found in Picosynechococcus sp. (strain ATCC 27264 / PCC 7002 / PR-6) (Agmenellum quadruplicatum).